We begin with the raw amino-acid sequence, 30 residues long: ANFEIVNNCPYTVWAAASPGGGRRLDRGQT.

This sequence belongs to the thaumatin family.

The protein localises to the secreted. Functionally, has antifungal activity against C.comatus, F.oxysporum and P.ostreatus. In Phaseolus vulgaris (Kidney bean), this protein is Thaumatin-like protein.